The chain runs to 3391 residues: Genome polyprotein (3391 aa).

Residues methionine 1 to methionine 15 form an interaction with host EXOC1 region. At methionine 1–serine 101 the chain is on the cytoplasmic side. The hydrophobic; homodimerization of capsid protein C stretch occupies residues leucine 37–phenylalanine 72. Residues serine 101–alanine 114 constitute a propeptide, ER anchor for the capsid protein C, removed in mature form by serine protease NS3. A helical transmembrane segment spans residues valine 102 to threonine 119. Over arginine 120–leucine 242 the chain is Extracellular. Asparagine 183 carries N-linked (GlcNAc...) asparagine; by host glycosylation. The helical transmembrane segment at arginine 243 to threonine 260 threads the bilayer. Position 261 (serine 261) is a topological domain, cytoplasmic. The chain crosses the membrane as a helical span at residues isoleucine 262–alanine 280. The Extracellular segment spans residues methionine 281–valine 725. Cystine bridges form between cysteine 283–cysteine 310, cysteine 340–cysteine 401, cysteine 354–cysteine 385, and cysteine 372–cysteine 396. Asparagine 347 carries an N-linked (GlcNAc...) asparagine; by host glycan. Residues aspartate 378–glycine 391 are fusion peptide. N-linked (GlcNAc...) asparagine; by host glycosylation is present at asparagine 433. 2 disulfide bridges follow: cysteine 465-cysteine 565 and cysteine 582-cysteine 613. A helical membrane pass occupies residues leucine 726–glycine 746. At leucine 747–threonine 752 the chain is on the cytoplasmic side. A helical transmembrane segment spans residues serine 753–glutamine 773. Over alanine 774–threonine 1198 the chain is Extracellular. Intrachain disulfides connect cysteine 778/cysteine 789, cysteine 829/cysteine 917, cysteine 953/cysteine 997, cysteine 1054/cysteine 1103, cysteine 1065/cysteine 1087, and cysteine 1086/cysteine 1090. N-linked (GlcNAc...) asparagine; by host glycans are attached at residues asparagine 904 and asparagine 981. Asparagine 1189 carries N-linked (GlcNAc...) asparagine; by host glycosylation. Residues threonine 1199 to phenylalanine 1219 traverse the membrane as a helical segment. Residues arginine 1220 to arginine 1225 are Cytoplasmic-facing. The helical transmembrane segment at glutamate 1226–asparagine 1244 threads the bilayer. Residues serine 1245–serine 1268 are Lumenal-facing. Residues histidine 1269–tyrosine 1289 form a helical membrane-spanning segment. Alanine 1290 is a topological domain (cytoplasmic). Residues tryptophan 1291–serine 1309 form a helical membrane-spanning segment. The Lumenal portion of the chain corresponds to threonine 1310 to lysine 1314. Residues threonine 1315–isoleucine 1335 traverse the membrane as a helical segment. At alanine 1336–serine 1345 the chain is on the cytoplasmic side. A helical transmembrane segment spans residues tryptophan 1346–leucine 1366. Over lysine 1367 to aspartate 1369 the chain is Lumenal. Residues valine 1370–glycine 1390 traverse the membrane as a helical segment. Topologically, residues serine 1391–threonine 1446 are cytoplasmic. The tract at residues leucine 1397 to aspartate 1436 is interacts with and activates NS3 protease. Positions leucine 1447–phenylalanine 1467 form an intramembrane region, helical. The Cytoplasmic portion of the chain corresponds to tryptophan 1468 to threonine 2147. The Peptidase S7 domain maps to serine 1475 to glutamate 1652. Catalysis depends on charge relay system; for serine protease NS3 activity residues histidine 1525, aspartate 1549, and serine 1609. The Helicase ATP-binding domain occupies aspartate 1655–glutamate 1811. The interval arginine 1659 to asparagine 1662 is important for RNA-binding. Leucine 1668–threonine 1675 is a binding site for ATP. The DEAH box signature appears at aspartate 1759–histidine 1762. Residues serine 1821–arginine 1988 enclose the Helicase C-terminal domain. Lysine 1863 is subject to N6-acetyllysine; by host. A helical transmembrane segment spans residues leucine 2148–glycine 2168. Residues lysine 2169 to glycine 2170 lie on the Lumenal side of the membrane. Residues leucine 2171–alanine 2191 constitute an intramembrane region (helical). Position 2192 (serine 2192) is a topological domain, lumenal. A helical membrane pass occupies residues valine 2193–isoleucine 2213. Residues proline 2214–alanine 2228 lie on the Cytoplasmic side of the membrane. A helical transmembrane segment spans residues tyrosine 2229–leucine 2249. The Lumenal segment spans residues glutamate 2250–aspartate 2275. An intramembrane region (helical) is located at residues leucine 2276–methionine 2296. Residues arginine 2297–proline 2348 lie on the Lumenal side of the membrane. N-linked (GlcNAc...) asparagine; by host glycans are attached at residues asparagine 2302 and asparagine 2306. The helical transmembrane segment at leucine 2349–leucine 2369 threads the bilayer. The Cytoplasmic segment spans residues glutamine 2370 to glutamine 2414. The helical transmembrane segment at isoleucine 2415–cysteine 2435 threads the bilayer. The Lumenal portion of the chain corresponds to glutamate 2436–threonine 2460. Asparagine 2458 carries an N-linked (GlcNAc...) asparagine; by host glycan. A helical membrane pass occupies residues isoleucine 2461–phenylalanine 2481. At serine 2482–tryptophan 3391 the chain is on the cytoplasmic side. Residues threonine 2494–histidine 2755 form the mRNA cap 0-1 NS5-type MT domain. Residue serine 2548 participates in S-adenosyl-L-methionine binding. Phosphoserine is present on serine 2548. Lysine 2553 serves as the catalytic For 2'-O-MTase activity. Residues valine 2569–leucine 2572 carry the SUMO-interacting motif motif. 6 residues coordinate S-adenosyl-L-methionine: glycine 2578, tryptophan 2579, threonine 2596, lysine 2597, aspartate 2623, and valine 2624. Aspartate 2638 (for 2'-O-MTase activity) is an active-site residue. Isoleucine 2639 is a binding site for S-adenosyl-L-methionine. Active-site for 2'-O-MTase activity residues include lysine 2672 and glutamate 2708. Tyrosine 2710 lines the S-adenosyl-L-methionine pocket. Residues glutamate 2929, histidine 2933, cysteine 2938, and cysteine 2941 each contribute to the Zn(2+) site. The region spanning glycine 3019–alanine 3168 is the RdRp catalytic domain. The Zn(2+) site is built by histidine 3203, cysteine 3219, and cysteine 3338.

This sequence in the N-terminal section; belongs to the class I-like SAM-binding methyltransferase superfamily. mRNA cap 0-1 NS5-type methyltransferase family. As to quaternary structure, homodimer. Interacts (via N-terminus) with host EXOC1 (via C-terminus); this interaction results in EXOC1 degradation through the proteasome degradation pathway. Forms heterodimers with envelope protein E in the endoplasmic reticulum and Golgi. In terms of assembly, homodimer; in the endoplasmic reticulum and Golgi. Interacts with protein prM. Interacts with non-structural protein 1. As to quaternary structure, homodimer; Homohexamer when secreted. Interacts with envelope protein E. Interacts (via N-terminus) with serine protease NS3. In terms of assembly, forms a heterodimer with serine protease NS3. May form homooligomers. As to quaternary structure, forms a heterodimer with NS2B. Interacts with NS4B. Interacts with unphosphorylated RNA-directed RNA polymerase NS5; this interaction stimulates RNA-directed RNA polymerase NS5 guanylyltransferase activity. Interacts with host SHFL. Interacts with host MAVS; this interaction inhibits the synthesis of IFN-beta. Interacts with host SHFL. Interacts with host AUP1; the interaction occurs in the presence of Dengue virus NS4B and induces lipophagy which facilitates production of virus progeny particles. In terms of assembly, interacts with serine protease NS3. As to quaternary structure, homodimer. Interacts with host STAT2; this interaction inhibits the phosphorylation of the latter, and, when all viral proteins are present (polyprotein), targets STAT2 for degradation. Interacts with serine protease NS3. Post-translationally, specific enzymatic cleavages in vivo yield mature proteins. Cleavages in the lumen of endoplasmic reticulum are performed by host signal peptidase, whereas cleavages in the cytoplasmic side are performed by serine protease NS3. Signal cleavage at the 2K-4B site requires a prior NS3 protease-mediated cleavage at the 4A-2K site. Cleaved in post-Golgi vesicles by a host furin, releasing the mature small envelope protein M, and peptide pr. This cleavage is incomplete as up to 30% of viral particles still carry uncleaved prM. In terms of processing, N-glycosylated. Post-translationally, N-glycosylated. The excreted form is glycosylated and this is required for efficient secretion of the protein from infected cells. Acetylated by host KAT5. Acetylation modulates NS3 RNA-binding and unwinding activities and plays an important positive role for viral replication. In terms of processing, sumoylation of RNA-directed RNA polymerase NS5 increases NS5 protein stability allowing proper viral RNA replication. Post-translationally, phosphorylated on serines residues. This phosphorylation may trigger NS5 nuclear localization.

It is found in the virion. It localises to the host nucleus. Its subcellular location is the host cytoplasm. The protein localises to the host perinuclear region. The protein resides in the secreted. It is found in the virion membrane. It localises to the host endoplasmic reticulum membrane. Its subcellular location is the host mitochondrion. It carries out the reaction Selective hydrolysis of -Xaa-Xaa-|-Yaa- bonds in which each of the Xaa can be either Arg or Lys and Yaa can be either Ser or Ala.. It catalyses the reaction RNA(n) + a ribonucleoside 5'-triphosphate = RNA(n+1) + diphosphate. The catalysed reaction is a ribonucleoside 5'-triphosphate + H2O = a ribonucleoside 5'-diphosphate + phosphate + H(+). The enzyme catalyses ATP + H2O = ADP + phosphate + H(+). It carries out the reaction a 5'-end (5'-triphosphoguanosine)-ribonucleoside in mRNA + S-adenosyl-L-methionine = a 5'-end (N(7)-methyl 5'-triphosphoguanosine)-ribonucleoside in mRNA + S-adenosyl-L-homocysteine. It catalyses the reaction a 5'-end (N(7)-methyl 5'-triphosphoguanosine)-ribonucleoside in mRNA + S-adenosyl-L-methionine = a 5'-end (N(7)-methyl 5'-triphosphoguanosine)-(2'-O-methyl-ribonucleoside) in mRNA + S-adenosyl-L-homocysteine + H(+). Functionally, plays a role in virus budding by binding to the cell membrane and gathering the viral RNA into a nucleocapsid that forms the core of a mature virus particle. During virus entry, may induce genome penetration into the host cytoplasm after hemifusion induced by the surface proteins. Can migrate to the cell nucleus where it modulates host functions. Overcomes the anti-viral effects of host EXOC1 by sequestering and degrading the latter through the proteasome degradation pathway. Its function is as follows. Inhibits RNA silencing by interfering with host Dicer. In terms of biological role, prevents premature fusion activity of envelope proteins in trans-Golgi by binding to envelope protein E at pH6.0. After virion release in extracellular space, gets dissociated from E dimers. Acts as a chaperone for envelope protein E during intracellular virion assembly by masking and inactivating envelope protein E fusion peptide. prM is the only viral peptide matured by host furin in the trans-Golgi network probably to avoid catastrophic activation of the viral fusion activity in acidic Golgi compartment prior to virion release. prM-E cleavage is inefficient, and many virions are only partially matured. These uncleaved prM would play a role in immune evasion. Functionally, may play a role in virus budding. Exerts cytotoxic effects by activating a mitochondrial apoptotic pathway through M ectodomain. May display a viroporin activity. Its function is as follows. Binds to host cell surface receptor and mediates fusion between viral and cellular membranes. Envelope protein is synthesized in the endoplasmic reticulum in the form of heterodimer with protein prM. They play a role in virion budding in the ER, and the newly formed immature particle is covered with 60 spikes composed of heterodimer between precursor prM and envelope protein E. The virion is transported to the Golgi apparatus where the low pH causes dissociation of PrM-E heterodimers and formation of E homodimers. prM-E cleavage is inefficient, and many virions are only partially matured. These uncleaved prM would play a role in immune evasion. In terms of biological role, involved in immune evasion, pathogenesis and viral replication. Once cleaved off the polyprotein, is targeted to three destinations: the viral replication cycle, the plasma membrane and the extracellular compartment. Essential for viral replication. Required for formation of the replication complex and recruitment of other non-structural proteins to the ER-derived membrane structures. Excreted as a hexameric lipoparticle that plays a role against host immune response. Antagonizing the complement function. Binds to the host macrophages and dendritic cells. Inhibits signal transduction originating from Toll-like receptor 3 (TLR3). Disrupts the host endothelial glycocalyx layer of host pulmonary microvascular endothelial cells, inducing degradation of sialic acid and shedding of heparan sulfate proteoglycans. NS1 induces expression of sialidases, heparanase, and activates cathepsin L, which activates heparanase via enzymatic cleavage. These effects are probably linked to the endothelial hyperpermeability observed in severe dengue disease. Functionally, component of the viral RNA replication complex that functions in virion assembly and antagonizes the host immune response. Its function is as follows. Required cofactor for the serine protease function of NS3. May have membrane-destabilizing activity and form viroporins. In terms of biological role, displays three enzymatic activities: serine protease, NTPase and RNA c. NS3 serine protease, in association with NS2B, performs its autocleavage and cleaves the polyprotein at dibasic sites in the cytoplasm: C-prM, NS2A-NS2B, NS2B-NS3, NS3-NS4A, NS4A-2K and NS4B-NS5. NS3 RNA helicase binds RNA and unwinds dsRNA in the 3' to 5' direction. Regulates the ATPase activity of the NS3 helicase activity. NS4A allows NS3 helicase to conserve energy during unwinding. Plays a role in the inhibition of the host innate immune response. Interacts with host MAVS and thereby prevents the interaction between RIGI and MAVS. In turn, IFN-beta production is impaired. Interacts with host AUP1 which mediates induction of lipophagy in host cells and facilitates production of virus progeny particles. Functionally, functions as a signal peptide for NS4B and is required for the interferon antagonism activity of the latter. Its function is as follows. Induces the formation of ER-derived membrane vesicles where the viral replication takes place. Inhibits interferon (IFN)-induced host STAT1 phosphorylation and nuclear translocation, thereby preventing the establishment of cellular antiviral state by blocking the IFN-alpha/beta pathway. In terms of biological role, replicates the viral (+) and (-) RNA genome, and performs the capping of genomes in the cytoplasm. NS5 methylates viral RNA cap at guanine N-7 and ribose 2'-O positions. Besides its role in RNA genome replication, also prevents the establishment of cellular antiviral state by blocking the interferon-alpha/beta (IFN-alpha/beta) signaling pathway. Inhibits host TYK2 and STAT2 phosphorylation, thereby preventing activation of JAK-STAT signaling pathway. The protein is Genome polyprotein of Aedes aegypti (Yellowfever mosquito).